Here is a 457-residue protein sequence, read N- to C-terminus: COBRA-like protein 3 (457 aa).

Positions 1-35 (MAVGGAGSSRSVAPCCCCAVLLAAALLFSAPATTE) are cleaved as a signal peptide. Residues N45, N170, N178, N217, N242, N258, N326, N341, and N361 are each glycosylated (N-linked (GlcNAc...) asparagine). N430 carries the GPI-anchor amidated asparagine lipid modification. Positions 431–457 (ASPLTKQPLTLSVLVFSIVLATLLAYA) are cleaved as a propeptide — removed in mature form. The helical transmembrane segment at 437–457 (QPLTLSVLVFSIVLATLLAYA) threads the bilayer.

The protein belongs to the COBRA family.

The protein resides in the cell membrane. In terms of biological role, involved in determining the orientation of cell expansion, probably by playing an important role in cellulose deposition. May act by recruiting cellulose synthesizing complexes to discrete positions on the cell surface. This is COBRA-like protein 3 (BC1L4) from Oryza sativa subsp. japonica (Rice).